Consider the following 97-residue polypeptide: MKLRPLHDRVVIRRSEEEKKTAGGIVLPGSAAEKANHGEILAVGPGKALESGEVRALSVKVGDKVVFGPYSGSNTVKVDGEDLLVMSENEILAVIEG.

The protein belongs to the GroES chaperonin family. Heptamer of 7 subunits arranged in a ring. Interacts with the chaperonin GroEL.

Its subcellular location is the cytoplasm. Its function is as follows. Together with the chaperonin GroEL, plays an essential role in assisting protein folding. The GroEL-GroES system forms a nano-cage that allows encapsulation of the non-native substrate proteins and provides a physical environment optimized to promote and accelerate protein folding. GroES binds to the apical surface of the GroEL ring, thereby capping the opening of the GroEL channel. The chain is Co-chaperonin GroES from Pseudomonas fluorescens (strain Pf0-1).